Reading from the N-terminus, the 217-residue chain is Large ribosomal subunit protein uL4 (217 aa).

The segment at 46–103 (KRQGTHATKTRGMVSGGGRKPFRQKGTGRARQGSIRAPHFTGGGTVHGPQPRDYSQRT) is disordered.

It belongs to the universal ribosomal protein uL4 family. In terms of assembly, part of the 50S ribosomal subunit.

Functionally, one of the primary rRNA binding proteins, this protein initially binds near the 5'-end of the 23S rRNA. It is important during the early stages of 50S assembly. It makes multiple contacts with different domains of the 23S rRNA in the assembled 50S subunit and ribosome. In terms of biological role, forms part of the polypeptide exit tunnel. The polypeptide is Large ribosomal subunit protein uL4 (Corynebacterium jeikeium (strain K411)).